A 227-amino-acid polypeptide reads, in one-letter code: PKHD-type hydroxylase Swit_4046 (227 aa).

Residues 78 to 178 (KVFPPLFNLY…RLCSFFWIQS (101 aa)) enclose the Fe2OG dioxygenase domain. Positions 96, 98, and 159 each coordinate Fe cation. Residue arginine 169 participates in 2-oxoglutarate binding.

Fe(2+) is required as a cofactor. It depends on L-ascorbate as a cofactor.

This is PKHD-type hydroxylase Swit_4046 from Rhizorhabdus wittichii (strain DSM 6014 / CCUG 31198 / JCM 15750 / NBRC 105917 / EY 4224 / RW1) (Sphingomonas wittichii).